A 279-amino-acid chain; its full sequence is Urease accessory protein UreD (279 aa).

Belongs to the UreD family. As to quaternary structure, ureD, UreF and UreG form a complex that acts as a GTP-hydrolysis-dependent molecular chaperone, activating the urease apoprotein by helping to assemble the nickel containing metallocenter of UreC. The UreE protein probably delivers the nickel.

The protein localises to the cytoplasm. Functionally, required for maturation of urease via the functional incorporation of the urease nickel metallocenter. In Pseudomonas fluorescens (strain Pf0-1), this protein is Urease accessory protein UreD.